The following is a 398-amino-acid chain: Putative F-box/kelch-repeat protein At2g29780 (398 aa).

Residues 1-46 (MAIISETSDDGSHGGVPNKKPEELHKNPKEDDHQEEEVENHPPIPR) are disordered. Basic and acidic residues predominate over residues 19–32 (KKPEELHKNPKEDD). Residues 43 to 90 (PIPRQIPQALIRRTVALIKRCHYPSLSLLSKAFRIVISSPELHQTRSS) enclose the F-box domain. Kelch repeat units follow at residues 148-195 (KMYV…VING), 196-241 (KIYV…GFVT), 243-289 (VVMQ…VIED), and 295-342 (DPYC…GGKL).

This Arabidopsis thaliana (Mouse-ear cress) protein is Putative F-box/kelch-repeat protein At2g29780.